A 336-amino-acid chain; its full sequence is Toluate 1,2-dioxygenase electron transfer component (336 aa).

A 2Fe-2S ferredoxin-type domain is found at 3–97 (HKVATDFEDG…DCVIRVPAAS (95 aa)). Positions 40, 45, 48, and 81 each coordinate [2Fe-2S] cluster. Positions 99-336 (VCKTQQAGYQ…FYYEKFAASA (238 aa)) are ferredoxin-reductase. The region spanning 104–204 (QAGYQAAISN…AGPLGAFYLR (101 aa)) is the FAD-binding FR-type domain.

The protein belongs to the bacterial ring-hydroxylating dioxygenase ferredoxin reductase family. As to quaternary structure, this dioxygenase system consists of three proteins: the two subunits of the hydroxylase component (XylX and XylY), and an electron transfer component (XylZ). FAD is required as a cofactor. Requires [2Fe-2S] cluster as cofactor.

It carries out the reaction 2 reduced [2Fe-2S]-[ferredoxin] + NAD(+) + H(+) = 2 oxidized [2Fe-2S]-[ferredoxin] + NADH. Functionally, electron transfer component of toluate 1,2-dioxygenase system. This is Toluate 1,2-dioxygenase electron transfer component (xylZ) from Pseudomonas putida (Arthrobacter siderocapsulatus).